We begin with the raw amino-acid sequence, 395 residues long: L-lactate dehydrogenase (395 aa).

One can recognise an FMN hydroxy acid dehydrogenase domain in the interval 1–380; that stretch reads MIISAASDYR…SKDSLVQELS (380 aa). Tyr24 lines the substrate pocket. 2 residues coordinate FMN: Ser106 and Gln127. A substrate-binding site is contributed by Tyr129. An FMN-binding site is contributed by Thr155. Arg164 provides a ligand contact to substrate. Lys251 contacts FMN. His275 serves as the catalytic Proton acceptor. Substrate is bound at residue Arg278. Residue 306–330 coordinates FMN; it reads DSGIRNGLDVVRMIALGADSVLLGR.

Belongs to the FMN-dependent alpha-hydroxy acid dehydrogenase family. It depends on FMN as a cofactor.

It is found in the cell inner membrane. The catalysed reaction is (S)-lactate + A = pyruvate + AH2. Catalyzes the conversion of L-lactate to pyruvate. Is coupled to the respiratory chain. This Enterobacter sp. (strain 638) protein is L-lactate dehydrogenase.